A 147-amino-acid polypeptide reads, in one-letter code: Endothelial differentiation-related factor 1 homolog (147 aa).

The segment at 1–69 (MAESDWDTVT…KLDRETEELH (69 aa)) is disordered. The segment covering 33–42 (RRGEEVETSK) has biased composition (basic and acidic residues). Polar residues predominate over residues 46 to 58 (AGQNKQHTITRNT). Residues 59–69 (AKLDRETEELH) show a composition bias toward basic and acidic residues. One can recognise an HTH cro/C1-type domain in the interval 81 to 135 (IQQGRQGKGMTQKDLATKINEKPQVIADYECGKAIPNNQVMGKIERVIGLKLRGK). Positions 92–111 (QKDLATKINEKPQVIADYEC) form a DNA-binding region, H-T-H motif.

It is found in the nucleus. In terms of biological role, probable transcriptional coactivator. The protein is Endothelial differentiation-related factor 1 homolog (edf1) of Xenopus laevis (African clawed frog).